Reading from the N-terminus, the 437-residue chain is Chromosomal replication initiator protein DnaA (437 aa).

The interval 1 to 82 is domain I, interacts with DnaA modulators; that stretch reads MIFPIWKKCL…KIIINIEKKK (82 aa). The segment at 82-101 is domain II; that stretch reads KLEKKKCIYKKKNIQIYLHS. The segment at 102 to 318 is domain III, AAA+ region; sequence EINKKYQFHN…GILKKIQILS (217 aa). The ATP site is built by glycine 146, glycine 148, lysine 149, and threonine 150. The domain IV, binds dsDNA stretch occupies residues 319–437; that stretch reads ILNKEKITIN…FIYLFNQLNA (119 aa).

Belongs to the DnaA family. As to quaternary structure, oligomerizes as a right-handed, spiral filament on DNA at oriC.

It is found in the cytoplasm. Functionally, plays an essential role in the initiation and regulation of chromosomal replication. ATP-DnaA binds to the origin of replication (oriC) to initiate formation of the DNA replication initiation complex once per cell cycle. Binds the DnaA box (a 9 base pair repeat at the origin) and separates the double-stranded (ds)DNA. Forms a right-handed helical filament on oriC DNA; dsDNA binds to the exterior of the filament while single-stranded (ss)DNA is stabiized in the filament's interior. The ATP-DnaA-oriC complex binds and stabilizes one strand of the AT-rich DNA unwinding element (DUE), permitting loading of DNA polymerase. After initiation quickly degrades to an ADP-DnaA complex that is not apt for DNA replication. Binds acidic phospholipids. The chain is Chromosomal replication initiator protein DnaA from Buchnera aphidicola subsp. Cinara cedri (strain Cc).